The chain runs to 490 residues: Glutamate--tRNA ligase (490 aa).

Residues 10–20 (PSPTGRMHVGN) carry the 'HIGH' region motif. Zn(2+)-binding residues include cysteine 109, cysteine 111, cysteine 140, and histidine 142. The 'KMSKS' region motif lies at 257–261 (KLSKR). Lysine 260 provides a ligand contact to ATP.

This sequence belongs to the class-I aminoacyl-tRNA synthetase family. Glutamate--tRNA ligase type 1 subfamily. Monomer. The cofactor is Zn(2+).

Its subcellular location is the cytoplasm. It carries out the reaction tRNA(Glu) + L-glutamate + ATP = L-glutamyl-tRNA(Glu) + AMP + diphosphate. Its function is as follows. Catalyzes the attachment of glutamate to tRNA(Glu) in a two-step reaction: glutamate is first activated by ATP to form Glu-AMP and then transferred to the acceptor end of tRNA(Glu). The polypeptide is Glutamate--tRNA ligase (Lachnoclostridium phytofermentans (strain ATCC 700394 / DSM 18823 / ISDg) (Clostridium phytofermentans)).